The chain runs to 628 residues: Probable potassium transport system protein Kup (628 aa).

A run of 12 helical transmembrane segments spans residues 20–40 (ALLT…SPLY), 63–83 (IISM…VMLV), 110–130 (FVAV…VITP), 151–171 (FILP…PLGT), 178–198 (FGPI…PQII), 212–232 (ALGL…AVVL), 256–276 (WFCV…ALVI), 296–316 (IPLV…VISG), 346–366 (IYMP…VLVF), 375–395 (AYGL…LIYV), 398–418 (TWWK…LLFA), and 422–442 (TKIH…IVVM).

It belongs to the HAK/KUP transporter (TC 2.A.72) family.

It is found in the cell membrane. It carries out the reaction K(+)(in) + H(+)(in) = K(+)(out) + H(+)(out). Its function is as follows. Transport of potassium into the cell. Likely operates as a K(+):H(+) symporter. This chain is Probable potassium transport system protein Kup, found in Corynebacterium glutamicum (strain R).